A 702-amino-acid chain; its full sequence is Glucosidase 2 subunit beta (702 aa).

A signal peptide spans 1–20 (MVSMFSLFLLLIEQSPLVAS). Asn145 is a glycosylation site (N-linked (GlcNAc...) asparagine). Residues 163 to 228 (SYREGKEALE…LRGEYFNQLS (66 aa)) are a coiled coil. 2 N-linked (GlcNAc...) asparagine glycosylation sites follow: Asn240 and Asn358. Residues 435–457 (PKVLPPDAVESEQDTNSDHIGTS) are disordered. Residues 478-517 (KDLVSLEKRFRSCESQVSLLENELKQKMDYKKLLDETEDE) adopt a coiled-coil conformation. Asn520 and Asn525 each carry an N-linked (GlcNAc...) asparagine glycan. An MRH domain is found at 537 to 689 (SYCLDDILDN…DVVGPLGCNK (153 aa)). Disulfide bonds link Cys539–Cys552, Cys646–Cys675, and Cys660–Cys687. N-linked (GlcNAc...) asparagine glycosylation is found at Asn688 and Asn699.

As to quaternary structure, heterodimer of a catalytic subunit alpha (ROT2) and a subunit beta (GTB1).

It is found in the endoplasmic reticulum. Its function is as follows. Subunit of glucosidase 2, which cleaves sequentially the 2 innermost alpha-1,3-linked glucose residues from the Glc(2)Man(9)GlcNAc(2) oligosaccharide precursor of immature glycoproteins. Specifically required for the cleavage of the final glucose. The protein is Glucosidase 2 subunit beta (GTB1) of Saccharomyces cerevisiae (strain ATCC 204508 / S288c) (Baker's yeast).